Consider the following 295-residue polypeptide: 4-diphosphocytidyl-2-C-methyl-D-erythritol kinase (295 aa).

Residue K25 is part of the active site. 108–118 lines the ATP pocket; the sequence is PMGSGLGGGSS. D150 is a catalytic residue.

The protein belongs to the GHMP kinase family. IspE subfamily.

It carries out the reaction 4-CDP-2-C-methyl-D-erythritol + ATP = 4-CDP-2-C-methyl-D-erythritol 2-phosphate + ADP + H(+). Its pathway is isoprenoid biosynthesis; isopentenyl diphosphate biosynthesis via DXP pathway; isopentenyl diphosphate from 1-deoxy-D-xylulose 5-phosphate: step 3/6. In terms of biological role, catalyzes the phosphorylation of the position 2 hydroxy group of 4-diphosphocytidyl-2C-methyl-D-erythritol. The polypeptide is 4-diphosphocytidyl-2-C-methyl-D-erythritol kinase (Pasteurella multocida (strain Pm70)).